The sequence spans 258 residues: MQDWDPDLYRQFEAERTRPATDLLAHITITSPQFISDLGCGPGNSTELLHRRFPDAQLVGIDHSQAMLASAQQRLPHCTFIEADIHQWRPSQPQNLIYANASLQWLTDHPHLFPSLLSQLAPRGVLAVQMPDNLDQPSHRAMREVAENGPWQQTLQEAGATRAKVLSANHYYDLLAPHAERVDIWRTTYYHPMPSAQAIVDWLRATGLRPYLAPLTEAMQLAFLQNYLAIIDKAYPARTDGRRLLAFPRLFIVAHAQR.

The protein belongs to the methyltransferase superfamily. Tam family.

It is found in the cytoplasm. It carries out the reaction trans-aconitate + S-adenosyl-L-methionine = (E)-3-(methoxycarbonyl)pent-2-enedioate + S-adenosyl-L-homocysteine. Catalyzes the S-adenosylmethionine monomethyl esterification of trans-aconitate. The sequence is that of Trans-aconitate 2-methyltransferase from Yersinia pestis bv. Antiqua (strain Antiqua).